A 184-amino-acid chain; its full sequence is Latex serine proteinase inhibitor (184 aa).

The cysteines at positions 45 and 89 are disulfide-linked. Asn-84 and Asn-90 each carry an N-linked (GlcNAc...) asparagine glycan. Cys-142 and Cys-153 form a disulfide bridge.

It belongs to the protease inhibitor I3 (leguminous Kunitz-type inhibitor) family.

Its subcellular location is the secreted. It localises to the extracellular space. The protein is Latex serine proteinase inhibitor of Carica papaya (Papaya).